The following is a 340-amino-acid chain: MGVCCPFLQPWDRARDQCLLNLPCLSDPVRRSSLLLKLALVALHLVFIGFLFLFDAEFIEKTKRDPWYMGCYILLFSATLLQYFVTSGSSPGYVVDAMRDVCEASAMYRNPSTTSIQHASRKSESVVVNVEGGSASCPRRPPTPWGKLVLDLYPPGTSIRNLTCGYCHVEQPPRTKHCHDCDRCVLQFDHHCVWLGTCIGQKNHSKFWWYICEETTLCIWTLIMYVDYLSNVAKPWWKNAIIILLLVILAISLIFVLLLLIFHSYLILTNQSTYELVRRRRIPYMRNIPGRVHPFSRGIRRNLYNVCCGNYNLDSLPTAFELEDRSRPYTCIDMLKCRCC.

Transmembrane regions (helical) follow at residues 34-54 (LLLK…LFLF) and 66-86 (PWYM…YFVT). One can recognise a DHHC domain in the interval 162–212 (LTCGYCHVEQPPRTKHCHDCDRCVLQFDHHCVWLGTCIGQKNHSKFWWYIC). Cysteine 192 serves as the catalytic S-palmitoyl cysteine intermediate. Transmembrane regions (helical) follow at residues 207 to 227 (FWWY…MYVD) and 241 to 261 (IIIL…LLLI).

This sequence belongs to the DHHC palmitoyltransferase family. Expressed in mature embryos, embryo sacs, cotyledons, whole seedlings, hydathodes, guard cells, sites of lateral root initiation, root tips and phloem, but not in xylem.

The protein localises to the vacuole membrane. It carries out the reaction L-cysteinyl-[protein] + hexadecanoyl-CoA = S-hexadecanoyl-L-cysteinyl-[protein] + CoA. S-acyltransferase involved in protein lipid modification. Catalyzes the palmitoylation of proteins peripheral or integral to the tonoplast. Required for the tonoplast localization of CBL2, CBL3 and CBL6, but not for the plasma membrane localization of CBL9, for the endosome localization of RABF1 or for the endomembrane localization of RABF2B. The polypeptide is Protein S-acyltransferase 10 (PAT10) (Arabidopsis thaliana (Mouse-ear cress)).